The sequence spans 1414 residues: DNA-directed RNA polymerase subunit beta' (1414 aa).

Zn(2+) contacts are provided by cysteine 70, cysteine 72, cysteine 85, and cysteine 88. The Mg(2+) site is built by aspartate 460, aspartate 462, and aspartate 464. Cysteine 815, cysteine 889, cysteine 896, and cysteine 899 together coordinate Zn(2+). Residues 1395-1414 are disordered; sequence EAEAQFADISSTPDSDTDAS.

Belongs to the RNA polymerase beta' chain family. In terms of assembly, the RNAP catalytic core consists of 2 alpha, 1 beta, 1 beta' and 1 omega subunit. When a sigma factor is associated with the core the holoenzyme is formed, which can initiate transcription. Mg(2+) is required as a cofactor. The cofactor is Zn(2+).

It carries out the reaction RNA(n) + a ribonucleoside 5'-triphosphate = RNA(n+1) + diphosphate. Functionally, DNA-dependent RNA polymerase catalyzes the transcription of DNA into RNA using the four ribonucleoside triphosphates as substrates. This chain is DNA-directed RNA polymerase subunit beta', found in Herminiimonas arsenicoxydans.